The chain runs to 265 residues: Putative N(omega)-hydroxy-L-arginine synthase DcsA (265 aa).

It belongs to the DcsA family. The cofactor is heme.

Functionally, involved in the biosynthesis of the antibiotic D-cycloserine (DCS), a cyclic structural analog of D-alanine, used as an antitubercular agent. Could catalyze the production of N(omega)-hydroxy-L-arginine (NHA) from L-arginine. The protein is Putative N(omega)-hydroxy-L-arginine synthase DcsA of Streptomyces lavendulae.